Here is a 533-residue protein sequence, read N- to C-terminus: GDP-fucose protein O-fucosyltransferase 4 (533 aa).

Residues M1–H20 lie on the Cytoplasmic side of the membrane. A helical; Signal-anchor for type II membrane protein membrane pass occupies residues L21 to A37. Residues E38–H533 are Lumenal-facing. 3 N-linked (GlcNAc...) asparagine glycosylation sites follow: N148, N206, and N358. C429 and C432 form a disulfide bridge. N511 carries an N-linked (GlcNAc...) asparagine glycan.

It belongs to the glycosyltransferase 10 family.

Its subcellular location is the endoplasmic reticulum membrane. It catalyses the reaction L-threonyl-[protein] + GDP-beta-L-fucose = 3-O-(alpha-L-fucosyl)-L-threonyl-[protein] + GDP + H(+). The enzyme catalyses L-seryl-[protein] + GDP-beta-L-fucose = 3-O-(alpha-L-fucosyl)-L-seryl-[protein] + GDP + H(+). It participates in protein modification; protein glycosylation. Protein O-fucosyltransferase that specifically catalyzes O-fucosylation of serine or threonine residues in EMI domains of target proteins. Attaches fucose through an O-glycosidic linkage. O-fucosylation of EMI domain-containing proteins may be required for facilitating protein folding and secretion. The protein is GDP-fucose protein O-fucosyltransferase 4 (fut11) of Xenopus tropicalis (Western clawed frog).